Here is a 553-residue protein sequence, read N- to C-terminus: Putative transport protein Ent638_0015 (553 aa).

5 consecutive transmembrane segments (helical) span residues 4-24, 28-48, 65-85, 95-115, and 158-178; these read IALT…IGNI, GVGL…HFAE, FGLI…FFAS, LFAL…HKLF, and MSYA…MWLV. RCK C-terminal domains follow at residues 191-276 and 279-361; these read KKHE…VIGQ and ETSL…MVGN. Transmembrane regions (helical) follow at residues 371–391, 403–425, 439–459, 464–484, 493–513, and 533–553; these read MLPV…PLYV, AGGP…LYWF, IVLF…DTLA, ISWI…IGIL, YLTL…LAFA, and LVMF…WGMG.

This sequence belongs to the AAE transporter (TC 2.A.81) family. YidE subfamily.

It is found in the cell membrane. The sequence is that of Putative transport protein Ent638_0015 from Enterobacter sp. (strain 638).